The chain runs to 517 residues: Crotonobetaine/carnitine--CoA ligase (517 aa).

It belongs to the ATP-dependent AMP-binding enzyme family.

It carries out the reaction 4-(trimethylamino)butanoate + ATP + CoA = 4-(trimethylamino)butanoyl-CoA + AMP + diphosphate. The enzyme catalyses crotonobetaine + ATP + CoA = crotonobetainyl-CoA + AMP + diphosphate. It catalyses the reaction (R)-carnitine + ATP + CoA = (R)-carnitinyl-CoA + AMP + diphosphate. The protein operates within amine and polyamine metabolism; carnitine metabolism. In terms of biological role, catalyzes the transfer of CoA to carnitine, generating the initial carnitinyl-CoA needed for the CaiB reaction cycle. Also has activity toward crotonobetaine and gamma-butyrobetaine. The polypeptide is Crotonobetaine/carnitine--CoA ligase (Escherichia coli (strain SE11)).